Reading from the N-terminus, the 1715-residue chain is Rho guanine nucleotide exchange factor TIAM2 (1715 aa).

Composition is skewed to polar residues over residues 1–22 (MGNS…TVTG) and 218–229 (GSPSSQRPSPTD). 4 disordered regions span residues 1–27 (MGNS…KQKP), 174–249 (FHNG…WYDS), 263–294 (SFLA…SSLS), and 385–418 (TGSL…NAEG). Residue G2 is the site of N-myristoyl glycine attachment. Over residues 235-245 (SKGSSLSSESS) the composition is skewed to low complexity. Over residues 395–411 (LQEPRSMEGSEYFDSHS) the composition is skewed to basic and acidic residues. One can recognise a PH 1 domain in the interval 504–618 (VVRKAGWLFF…WVTAIHSACA (115 aa)). Residues 665–692 (PKNRKAIENQIRQWEQNLEKFHMDLFRM) adopt a coiled-coil conformation. Residues 831–902 (VQTYVHFQDN…YMQEQVYDEI (72 aa)) enclose the RBD domain. The 87-residue stretch at 911–997 (DVQLTKTGDM…GLTLVARPVT (87 aa)) folds into the PDZ domain. The tract at residues 1092–1113 (THTNSMEAPTESHDPPPRPLAR) is disordered. The DH domain occupies 1120-1314 (RLRKVIQELV…EKVASHINEM (195 aa)). The PH 2 domain maps to 1347–1478 (LLMHSTVSWL…KVIRSILREN (132 aa)). The disordered stretch occupies residues 1515-1582 (SLKGLRTSSS…EGLAEFPDGL (68 aa)). Over residues 1522–1532 (SSSSEWPSEPS) the composition is skewed to low complexity. The span at 1533-1552 (KGNSLDSDECSLSSGTQSSG) shows a compositional bias: polar residues. The segment covering 1557–1572 (ESRRDSKSTELEKDAQ) has biased composition (basic and acidic residues). At S1604 the chain carries Phosphoserine. Phosphothreonine is present on T1662.

It belongs to the TIAM family. In terms of assembly, interacts with MAP1A, MAP1B, PARP1 and YWHAE. Interacts with CD44, PARD3 and MAPK8IP2. Phosphorylated on serine and threonine residues. Phosphorylated on Thr-1662 by Rho-kinase. Its phosphorylation by Rho-kinase inhibits its guanine nucleotide exchange activity, its interaction with MAP1A, MAP1B, PARP1 and YWHAE and reduces its ability to promote neurite growth. Expressed in fetal brain (at protein level). Expressed in the olfactory bulb, cortical plate of the cerebral cortex, caudate putamen, hippocampus, ependymal cells of the lateral surface of the lateral ventricles of the brain. Weakly expressed in heart, lung, liver, skeletal muscle, kidney and testis.

The protein resides in the cytoplasm. Its subcellular location is the cell projection. The protein localises to the lamellipodium. It localises to the filopodium. It is found in the growth cone. The protein resides in the neuron projection. Its subcellular location is the perikaryon. Its function is as follows. Modulates the activity of RHO-like proteins and connects extracellular signals to cytoskeletal activities. Acts as a GDP-dissociation stimulator protein that stimulates the GDP-GTP exchange activity of RHO-like GTPases and activates them. Activates specifically RAC1, but not CDC42 and RHOA. Mediates extracellular laminin signals to activate Rac1, contributing to neurite growth. Involved in lamellipodial formation and advancement of the growth cone of embryonic hippocampal neurons. Promotes migration of neurons in the cerebral cortex. When overexpressed, induces membrane ruffling accompanied by the accumulation of actin filaments along the altered plasma membrane. The protein is Rho guanine nucleotide exchange factor TIAM2 of Mus musculus (Mouse).